A 146-amino-acid polypeptide reads, in one-letter code: Large ribosomal subunit protein uL15 (146 aa).

The disordered stretch occupies residues 1–61 (MELNSLKPAA…GGQMPMHRRL (61 aa)). Over residues 30–39 (TATKGHKGQK) the composition is skewed to basic residues.

Belongs to the universal ribosomal protein uL15 family. In terms of assembly, part of the 50S ribosomal subunit.

Functionally, binds to the 23S rRNA. This is Large ribosomal subunit protein uL15 from Geotalea uraniireducens (strain Rf4) (Geobacter uraniireducens).